Consider the following 497-residue polypeptide: 3-octaprenyl-4-hydroxybenzoate carboxy-lyase (497 aa).

Residue Asn-172 coordinates Mn(2+). Prenylated FMN-binding positions include 175–177, 189–191, and 194–195; these read IYR, RWL, and RG. Position 238 (Glu-238) interacts with Mn(2+). The active-site Proton donor is Asp-287.

Belongs to the UbiD family. In terms of assembly, homohexamer. It depends on prenylated FMN as a cofactor. Mn(2+) is required as a cofactor.

The protein resides in the cell membrane. The catalysed reaction is a 4-hydroxy-3-(all-trans-polyprenyl)benzoate + H(+) = a 2-(all-trans-polyprenyl)phenol + CO2. It functions in the pathway cofactor biosynthesis; ubiquinone biosynthesis. Catalyzes the decarboxylation of 3-octaprenyl-4-hydroxy benzoate to 2-octaprenylphenol, an intermediate step in ubiquinone biosynthesis. In Enterobacter sp. (strain 638), this protein is 3-octaprenyl-4-hydroxybenzoate carboxy-lyase.